Consider the following 221-residue polypeptide: MALPGQQAVDYPSFKLVIVGDGGTGKTTFVKRHLTGEFEKKYEPTIGVEVHPLDFFTNCGKIRFYCWDTAGQEKFGGLRDGYYIHGQCAIIMFDVTARLTYKNVPTWHRDLCRVCENIPIVLCGNKVDVKNRQVKAKQVTFHRKKNLQYYEISAKSNYNFEKPFLYLARKLAGDPNLHFVESPALAPPEVQIDLAAQQQHEAELAAAASQPLPDDDDETFD.

A Small GTPase Ran-type domain is found at 10 to 174 (DYPSFKLVIV…LYLARKLAGD (165 aa)). 21-28 (DGGTGKTT) serves as a coordination point for GTP. The tract at residues 40–48 (KKYEPTIGV) is switch-I. Residues G71, 125–128 (NKVD), and 153–155 (SAK) each bind GTP. Positions 71 to 87 (GQEKFGGLRDGYYIHGQ) are switch-II. The span at 199–208 (QHEAELAAAA) shows a compositional bias: low complexity. Residues 199 to 221 (QHEAELAAAASQPLPDDDDETFD) are disordered.

Belongs to the small GTPase superfamily. Ran family. In terms of assembly, found in a nuclear export complex with RanGTP, exportin and pre-miRNA.

It is found in the nucleus. In terms of biological role, GTP-binding protein involved in nucleocytoplasmic transport. Required for the import of protein into the nucleus and also for RNA export. Involved in chromatin condensation and control of cell cycle. The chain is GTP-binding nuclear protein Ran-A1 (RAN-A1) from Nicotiana tabacum (Common tobacco).